Consider the following 367-residue polypeptide: tRNA-specific 2-thiouridylase MnmA (367 aa).

Residues 12–19 and Met38 contribute to the ATP site; that span reads GMSGGVDS. The interaction with target base in tRNA stretch occupies residues 98 to 100; sequence NPD. Cys103 serves as the catalytic Nucleophile. Cys103 and Cys200 are disulfide-bonded. Gly128 is a binding site for ATP. The tract at residues 150–152 is interaction with tRNA; the sequence is KDQ. The active-site Cysteine persulfide intermediate is Cys200. Residues 312-313 are interaction with tRNA; it reads RY.

It belongs to the MnmA/TRMU family. Interacts with TusE.

It localises to the cytoplasm. It catalyses the reaction S-sulfanyl-L-cysteinyl-[protein] + uridine(34) in tRNA + AH2 + ATP = 2-thiouridine(34) in tRNA + L-cysteinyl-[protein] + A + AMP + diphosphate + H(+). Its function is as follows. Catalyzes the 2-thiolation of uridine at the wobble position (U34) of tRNA(Lys), tRNA(Glu) and tRNA(Gln), leading to the formation of s(2)U34, the first step of tRNA-mnm(5)s(2)U34 synthesis. Sulfur is provided by IscS, via a sulfur-relay system. Binds ATP and its substrate tRNAs. In Blochmanniella pennsylvanica (strain BPEN), this protein is tRNA-specific 2-thiouridylase MnmA.